A 316-amino-acid chain; its full sequence is Ribosomal RNA small subunit methyltransferase H (316 aa).

S-adenosyl-L-methionine is bound by residues Ser-35–His-37, Asp-55, Phe-84, Asp-105, and Gln-112.

The protein belongs to the methyltransferase superfamily. RsmH family.

Its subcellular location is the cytoplasm. The enzyme catalyses cytidine(1402) in 16S rRNA + S-adenosyl-L-methionine = N(4)-methylcytidine(1402) in 16S rRNA + S-adenosyl-L-homocysteine + H(+). Specifically methylates the N4 position of cytidine in position 1402 (C1402) of 16S rRNA. This Streptococcus pyogenes serotype M4 (strain MGAS10750) protein is Ribosomal RNA small subunit methyltransferase H.